Reading from the N-terminus, the 380-residue chain is Probable inactive dehydrogenase easA (380 aa).

FMN is bound by residues 25 to 27, Ala-60, Gln-102, and His-171; that span reads PMT. Substrate contacts are provided by His-171 and Asn-174. FMN contacts are provided by residues Lys-223, Gly-299, 324-325, and Arg-325; that span reads GR. Residue Tyr-352 coordinates substrate.

Belongs to the NADH:flavin oxidoreductase/NADH oxidase family.

Functionally, probable inactive dehydrogenase; part of the gene cluster that mediates the biosynthesis of fungal ergot alkaloid. DmaW catalyzes the first step of ergot alkaloid biosynthesis by condensing dimethylallyl diphosphate (DMAP) and tryptophan to form 4-dimethylallyl-L-tryptophan. The second step is catalyzed by the methyltransferase easF that methylates 4-dimethylallyl-L-tryptophan in the presence of S-adenosyl-L-methionine, resulting in the formation of 4-dimethylallyl-L-abrine. The catalase easC and the FAD-dependent oxidoreductase easE then transform 4-dimethylallyl-L-abrine to chanoclavine-I which is further oxidized by easD in the presence of NAD(+), resulting in the formation of chanoclavine-I aldehyde. Agroclavine dehydrogenase easG then mediates the conversion of chanoclavine-I aldehyde to agroclavine via a non-enzymatic adduct reaction: the substrate is an iminium intermediate that is formed spontaneously from chanoclavine-I aldehyde in the presence of glutathione. The presence of easA is not required to complete this reaction. Further conversion of agroclavine to paspalic acid is a two-step process involving oxidation of agroclavine to elymoclavine and of elymoclavine to paspalic acid, the second step being performed by the elymoclavine oxidase cloA. Paspalic acid is then further converted to D-lysergic acid. Ergopeptines are assembled from D-lysergic acid and three different amino acids by the D-lysergyl-peptide-synthetases composed each of a monomudular and a trimodular nonribosomal peptide synthetase subunit. LpsB and lpsC encode the monomodular subunits responsible for D-lysergic acid activation and incorporation into the ergopeptine backbone. LpsA1 and A2 subunits encode the trimodular nonribosomal peptide synthetase assembling the tripeptide portion of ergopeptines. LpsA1 is responsible for formation of the major ergopeptine, ergotamine, and lpsA2 for alpha-ergocryptine, the minor ergopeptine of the total alkaloid mixture elaborated by C.purpurea. D-lysergyl-tripeptides are assembled by the nonribosomal peptide synthetases and released as N-(D-lysergyl-aminoacyl)-lactams. Cyclolization of the D-lysergyl-tripeptides is performed by the Fe(2+)/2-ketoglutarate-dependent dioxygenase easH which introduces a hydroxyl group into N-(D-lysergyl-aminoacyl)-lactam at alpha-C of the aminoacyl residue followed by spontaneous condensation with the terminal lactam carbonyl group. The polypeptide is Probable inactive dehydrogenase easA (Claviceps purpurea (Ergot fungus)).